The sequence spans 618 residues: MATKHQFQTEITQLLDLMIHSLYSHKEIFLRELISNASDALDKLSYLTLTQENLKTLSFEPRIDISFDEEKKTITIEDNGIGMNENDMKEHLGIIAKSGTKSFLSQLSGDKKKDSALIGQFGVGFYSAFMVAHRVVVQSKKAGEEKAYAWVSEGKGEYEIGECVKESQGTQITLYLREEDAHFASRWEIEGIIHKYSEHIAFPIYLAFVESKFEGEGENKKEIKENKQSQINTAKALWKIPKAELKDTDYKEFYATLSHDNNEPMRWIHTKVEGNLEYTTLFYIPQKAPFDLFRVDYQSGVKLYVKRVFITDDDKELLPPYLRFVRGVIDSEDLPLNVSREILQQNKILANIKSASTKKILSEITNIAKNEADYKTFYEQFGKVLKEGLYGDYENKEKILELLRFDSFKSEYISLKAYKESMGNEQKSIYYMLGENKDALKNAPLLEKFAQKGFDVLLLSDEIDAIVMPMVGEYDKVPLKSINSKEALAELGEESIDEATQNAYEPLIKGFKDALGEQIAEVKLSSLGDAPLTLIKEDNNPMMANLMAQMGQKVPETKPILQLNITHPLFEKLKTAQEDKIKQSALLLFGAALILEGSTLKNAKDFNTELNSLLLQSL.

Residues 1–340 (MATKHQFQTE…SEDLPLNVSR (340 aa)) are a; substrate-binding. Residues 341–545 (EILQQNKILA…KEDNNPMMAN (205 aa)) form a b region. The segment at 546–618 (LMAQMGQKVP…ELNSLLLQSL (73 aa)) is c.

Belongs to the heat shock protein 90 family. In terms of assembly, homodimer.

It localises to the cytoplasm. Molecular chaperone. Has ATPase activity. The polypeptide is Chaperone protein HtpG (Helicobacter hepaticus (strain ATCC 51449 / 3B1)).